Consider the following 177-residue polypeptide: Disulfide bond formation protein B (177 aa).

Residues 1–14 (MLIFFKNLSMKRST) lie on the Cytoplasmic side of the membrane. A helical membrane pass occupies residues 15-31 (WILLFISALVLESTALY). The Periplasmic portion of the chain corresponds to 32–49 (FQHGMGLNPCVMCIYERV). Cys-41 and Cys-44 are oxidised to a cystine. A helical transmembrane segment spans residues 50–65 (AILGILFSGLIGCIAP). Over 66–72 (KWLVLRI) the chain is Cytoplasmic. Residues 73-90 (LALLIGLGSAVKGLLLAI) traverse the membrane as a helical segment. The Periplasmic segment spans residues 91–145 (KHLDYQINVYPWNQCAMVPDFPQTLPLDKWFPNIFMPSGSCSDITWSFLGFSMVQ). Cys-105 and Cys-131 are oxidised to a cystine. Residues 146–164 (WIIVIFACYFLFFIILSIS) traverse the membrane as a helical segment. Residues 165-177 (QFKKVRKNRMLFR) are Cytoplasmic-facing.

Belongs to the DsbB family.

The protein resides in the cell inner membrane. Required for disulfide bond formation in some periplasmic proteins. Acts by oxidizing the DsbA protein. In Histophilus somni (strain 129Pt) (Haemophilus somnus), this protein is Disulfide bond formation protein B.